A 366-amino-acid chain; its full sequence is MKGFVASVVLLACGALAADIVEPEDCTSFPCMIFEDNFDYLDNDIWEHEITMSGGGNWEFQAYVNNRSISYTRDSTLFIKPDLTSNWKGEDFLSSGTLDLWGMNGRGDVCTGNSYYGCSRVGSSSNIINPVTSARLRTMSNFAFRYGRLEVRAKMPRGDWLWPAIWMLPRNWPYGLWPASGEIDILESRGNDDFGTLGNQYGGTTLHWGPFWPYNFFEKTHAEYSANTGSFADDFHVWRLDWTKDNMEFYVDDVLQLTVDPGTSFWDFAGMGPFFDNPWAAGAKMAPFDQKFYLILNVAVGGTNGFFPDGIASKPWSNLSPTAFLDFWNARDEWLPSWKAGEDRISEGAAMQVDYVRVWKMESTEQ.

The N-terminal stretch at 1–17 (MKGFVASVVLLACGALA) is a signal peptide. One can recognise a GH16 domain in the interval 18–364 (ADIVEPEDCT…YVRVWKMEST (347 aa)). N66 is a glycosylation site (N-linked (GlcNAc...) asparagine).

Belongs to the glycosyl hydrolase 16 family. In terms of tissue distribution, constitutively expressed in hemocytes.

The protein localises to the secreted. In terms of biological role, binds to beta-1,3-glucan. May play a role in recognition of microorganisms and in activation of the prophenoloxidase cascade. This Penaeus monodon (Giant tiger prawn) protein is Beta-1,3-glucan-binding protein.